Reading from the N-terminus, the 404-residue chain is Argininosuccinate synthase (404 aa).

Residues 10-18 (AYSGGLDTS) and alanine 37 contribute to the ATP site. L-citrulline-binding residues include tyrosine 90 and serine 95. Position 120 (glycine 120) interacts with ATP. L-aspartate-binding residues include threonine 122, asparagine 126, and aspartate 127. Asparagine 126 contacts L-citrulline. L-citrulline-binding residues include arginine 130, serine 180, serine 189, glutamate 265, and tyrosine 277.

Belongs to the argininosuccinate synthase family. Type 1 subfamily. In terms of assembly, homotetramer.

It is found in the cytoplasm. The enzyme catalyses L-citrulline + L-aspartate + ATP = 2-(N(omega)-L-arginino)succinate + AMP + diphosphate + H(+). The protein operates within amino-acid biosynthesis; L-arginine biosynthesis; L-arginine from L-ornithine and carbamoyl phosphate: step 2/3. The polypeptide is Argininosuccinate synthase (Helicobacter hepaticus (strain ATCC 51449 / 3B1)).